The sequence spans 236 residues: Auxin-responsive protein IAA13 (236 aa).

Disordered stretches follow at residues 1-24, 52-93, and 105-130; these read MAGA…GGAA, EAAA…WPPV, and SVKS…GSNS. Positions 12–16 match the EAR-like (transcriptional repression) motif; the sequence is LRLGL. Residues 52 to 61 are compositionally biased toward low complexity; the sequence is EAAAGKAEAP. Residues 62–81 are compositionally biased toward basic and acidic residues; it reads AAEKAKRPAEAAAADAEKPP. Over residues 117–130 the composition is skewed to low complexity; the sequence is QQQQPAANASGSNS. The 88-residue stretch at 131–218 folds into the PB1 domain; sequence SAFVKVSMDG…SCKRLRIMKG (88 aa).

The protein belongs to the Aux/IAA family. In terms of assembly, homodimers and heterodimers.

It is found in the nucleus. In terms of biological role, aux/IAA proteins are short-lived transcriptional factors that function as repressors of early auxin response genes at low auxin concentrations. The sequence is that of Auxin-responsive protein IAA13 (IAA13) from Oryza sativa subsp. japonica (Rice).